The following is a 573-amino-acid chain: Urease subunit alpha (573 aa).

Residues 136–573 (GAIDCHVHLI…LPMAQRYFLF (438 aa)) enclose the Urease domain. 3 residues coordinate Ni(2+): His141, His143, and Lys224. The residue at position 224 (Lys224) is an N6-carboxylysine. Residue His226 coordinates substrate. Positions 253 and 279 each coordinate Ni(2+). Residue His327 is the Proton donor of the active site. Asp367 is a Ni(2+) binding site.

Belongs to the metallo-dependent hydrolases superfamily. Urease alpha subunit family. Heterotrimer of UreA (gamma), UreB (beta) and UreC (alpha) subunits. Three heterotrimers associate to form the active enzyme. Requires Ni cation as cofactor. Post-translationally, carboxylation allows a single lysine to coordinate two nickel ions.

It localises to the cytoplasm. The catalysed reaction is urea + 2 H2O + H(+) = hydrogencarbonate + 2 NH4(+). Its pathway is nitrogen metabolism; urea degradation; CO(2) and NH(3) from urea (urease route): step 1/1. This Mycobacterium sp. (strain JLS) protein is Urease subunit alpha.